We begin with the raw amino-acid sequence, 77 residues long: DNA-directed RNA polymerase subunit omega (77 aa).

The protein belongs to the RNA polymerase subunit omega family. As to quaternary structure, the RNAP catalytic core consists of 2 alpha, 1 beta, 1 beta' and 1 omega subunit. When a sigma factor is associated with the core the holoenzyme is formed, which can initiate transcription.

It catalyses the reaction RNA(n) + a ribonucleoside 5'-triphosphate = RNA(n+1) + diphosphate. In terms of biological role, promotes RNA polymerase assembly. Latches the N- and C-terminal regions of the beta' subunit thereby facilitating its interaction with the beta and alpha subunits. The chain is DNA-directed RNA polymerase subunit omega from Dichelobacter nodosus (strain VCS1703A).